A 725-amino-acid polypeptide reads, in one-letter code: Dynein axonemal assembly factor 1 (725 aa).

Residues 1 to 91 (MHPEPSEPAT…EDRGPRMTKS (91 aa)) are disordered. Positions 38–48 (GCKEEINDPKE) are enriched in basic and acidic residues. Positions 53–67 (SSDTSYHSQQKQSGD) are enriched in polar residues. Residues 76 to 86 (HPREDREDRGP) are compositionally biased toward basic and acidic residues. LRR repeat units follow at residues 107 to 129 (ALND…EEYT), 130 to 151 (GLRC…EAQT), 152 to 173 (ELRC…EPLQ), 174 to 195 (KLDA…SCLP), 196 to 217 (VLNT…QHLQ), and 221 to 242 (RLCV…SILE). The LRRCT domain maps to 256-294 (PVIRQIPNYRRTVTVRLKHLTYLDDRPVFPKDRACAEAW). Residues 330-345 (RAEERKRQRESQERGE) show a composition bias toward basic and acidic residues. Residues 330 to 513 (RAEERKRQRE…LGAAREEPTP (184 aa)) form a disordered region. The residue at position 358 (Ser-358) is a Phosphoserine. Composition is skewed to basic and acidic residues over residues 360–408 (EGKE…REDG) and 481–491 (VKGEDGDREPE). At Thr-559 the chain carries Phosphothreonine. Phosphoserine is present on residues Ser-562 and Ser-583. Residues 632–642 (DLEIRKQDTKS) show a composition bias toward basic and acidic residues. The interval 632 to 703 (DLEIRKQDTK…AATPPETCVG (72 aa)) is disordered.

Belongs to the DNAAF1 family. In terms of tissue distribution, mainly expressed in trachea and testis.

The protein resides in the cell projection. Its subcellular location is the cilium. The protein localises to the cytoplasm. It localises to the cytoskeleton. It is found in the spindle pole. In terms of biological role, cilium-specific protein required for the stability of the ciliary architecture. Plays a role in cytoplasmic preassembly of dynein arms. Involved in regulation of microtubule-based cilia and actin-based brush border microvilli. In Homo sapiens (Human), this protein is Dynein axonemal assembly factor 1 (DNAAF1).